A 354-amino-acid polypeptide reads, in one-letter code: Guanine nucleotide-binding protein G(i) subunit alpha-1 (354 aa).

The N-myristoyl glycine moiety is linked to residue glycine 2. Cysteine 3 carries the S-palmitoyl cysteine lipid modification. One can recognise a G-alpha domain in the interval 32–354 (REVKLLLLGA…KNNLKDCGLF (323 aa)). The G1 motif stretch occupies residues 35-48 (KLLLLGAGESGKST). Residues 43–48 (ESGKST), 150–151 (DS), and 175–178 (LRTR) each bind GTP. A Mg(2+)-binding site is contributed by serine 47. Positions 173–181 (DVLRTRVKT) are G2 motif. Residue threonine 181 participates in Mg(2+) binding. The G3 motif stretch occupies residues 196 to 205 (FKMFDVGGQR). GTP contacts are provided by residues 200 to 204 (DVGGQ), 269 to 272 (NKKD), and alanine 326. The segment at 265-272 (ILFLNKKD) is G4 motif. The segment at 324-329 (TCATDT) is G5 motif.

This sequence belongs to the G-alpha family. G(i/o/t/z) subfamily. Heterotrimeric G proteins are composed of 3 units; alpha, beta and gamma. The alpha chain contains the guanine nucleotide binding site. Part of a spindle orientation complex. Identified in complex with the beta subunit GNB1 and the gamma subunit GNG1. Identified in complex with the beta subunit GNB1 and the gamma subunit GNG2. GTP binding causes dissociation of the heterotrimer, liberating the individual subunits so that they can interact with downstream effector proteins. Myristoylation at Gly-2 is required for membrane anchoring before palmitoylation. In terms of processing, palmitoylation at Cys-3 varies with membrane lipid composition.

It is found in the nucleus. The protein localises to the cytoplasm. The protein resides in the cell membrane. It localises to the cytoskeleton. Its subcellular location is the microtubule organizing center. It is found in the centrosome. The protein localises to the cell cortex. The protein resides in the membrane. The enzyme catalyses GTP + H2O = GDP + phosphate + H(+). Functionally, guanine nucleotide-binding proteins (G proteins) function as transducers downstream of G protein-coupled receptors (GPCRs) in numerous signaling cascades. The alpha chain contains the guanine nucleotide binding site and alternates between an active, GTP-bound state and an inactive, GDP-bound state. Signaling by an activated GPCR promotes GDP release and GTP binding. The alpha subunit has a low GTPase activity that converts bound GTP to GDP, thereby terminating the signal. Both GDP release and GTP hydrolysis are modulated by numerous regulatory proteins. Signaling is mediated via effector proteins, such as adenylate cyclase. Inhibits adenylate cyclase activity, leading to decreased intracellular cAMP levels. Required for cortical dynein-dynactin complex recruitment during metaphase. In Xenopus laevis (African clawed frog), this protein is Guanine nucleotide-binding protein G(i) subunit alpha-1 (gnai1).